The chain runs to 342 residues: S-adenosylmethionine:tRNA ribosyltransferase-isomerase (342 aa).

This sequence belongs to the QueA family. As to quaternary structure, monomer.

Its subcellular location is the cytoplasm. The enzyme catalyses 7-aminomethyl-7-carbaguanosine(34) in tRNA + S-adenosyl-L-methionine = epoxyqueuosine(34) in tRNA + adenine + L-methionine + 2 H(+). The protein operates within tRNA modification; tRNA-queuosine biosynthesis. In terms of biological role, transfers and isomerizes the ribose moiety from AdoMet to the 7-aminomethyl group of 7-deazaguanine (preQ1-tRNA) to give epoxyqueuosine (oQ-tRNA). The polypeptide is S-adenosylmethionine:tRNA ribosyltransferase-isomerase (Streptococcus pyogenes serotype M49 (strain NZ131)).